The chain runs to 805 residues: Mediator of RNA polymerase II transcription subunit 25 (805 aa).

Disordered regions lie at residues 430-455 (GSAQ…GQTV) and 786-805 (SQSQ…GFMN). Composition is skewed to low complexity over residues 438–451 (SAPS…PSMS) and 786–795 (SQSQGSSQGL).

This sequence belongs to the Mediator complex subunit 25 family. As to quaternary structure, interacts with MYC2 (via N-terminus). MED25 competes with JAZ7 for binding to MYC2.

In terms of biological role, component of the Mediator complex, a coactivator involved in the regulated transcription of nearly all RNA polymerase II-dependent genes. Mediator functions as a bridge to convey information from gene-specific regulatory proteins to the basal RNA polymerase II transcription machinery. Mediator is recruited to promoters by direct interactions with regulatory proteins and serves as a scaffold for the assembly of a functional pre-initiation complex with RNA polymerase II and the general transcription factors. Plays a positive role in wound-induced activation of jasmonate-responsive genes whose promoters are targeted by MYC2. This chain is Mediator of RNA polymerase II transcription subunit 25, found in Solanum lycopersicum (Tomato).